Here is a 321-residue protein sequence, read N- to C-terminus: Glucan 1,3-beta-glucosidase (321 aa).

Residues 1 to 21 (MQFLSSFVFAALALLPLSAMA) form the signal peptide. Residues Asn-39 and Asn-99 are each glycosylated (N-linked (GlcNAc...) asparagine). Glu-141 serves as the catalytic Proton donor. N-linked (GlcNAc...) asparagine glycans are attached at residues Asn-210, Asn-213, and Asn-237. Glu-244 acts as the Nucleophile in catalysis. Residues Asn-309 and Asn-317 are each glycosylated (N-linked (GlcNAc...) asparagine).

It belongs to the glycosyl hydrolase 17 family.

The protein localises to the secreted. It localises to the cell wall. It carries out the reaction Successive hydrolysis of beta-D-glucose units from the non-reducing ends of (1-&gt;3)-beta-D-glucans, releasing alpha-glucose.. In terms of biological role, glucanases possibly play a role in cell expansion during growth, in cell-cell fusion during mating, and in spore release during sporulation. This enzyme may be involved in beta-glucan degradation and also function biosynthetically as a transglycosylase. This Schizosaccharomyces pombe (strain 972 / ATCC 24843) (Fission yeast) protein is Glucan 1,3-beta-glucosidase (bgl2).